We begin with the raw amino-acid sequence, 162 residues long: MGSHPTPGLQRTTSAGYRLPPTRPPASVSPAARGGPMASRGLAGGCQAPQALKAQRVAQGAACDGVQQDQLWRELLEAERRGQQRWIQNWSFLKDYDPMGNKKEPEKLPDHVPLFSDTVPSSTNQVVGSRLDTPLGQTLIRMDFFFTEGARKKKLEDQMQPI.

The tract at residues 1–44 (MGSHPTPGLQRTTSAGYRLPPTRPPASVSPAARGGPMASRGLAG) is disordered.

The protein localises to the cell projection. Its subcellular location is the cilium. In Homo sapiens (Human), this protein is Ciliary microtubule inner protein 5.